The following is a 319-amino-acid chain: D-alanine--D-alanine ligase (319 aa).

The ATP-grasp domain occupies 109 to 313 (KRVWLAEGLP…YEQLCLHILQ (205 aa)). 139 to 194 (PDDLGLPLIVKPPREGSSIGVTKVLGYSQMQDAVALSARHDPDVLCEEFIDGAEVT) contributes to the ATP binding site. Mg(2+)-binding residues include Asp266, Glu280, and Asn282.

This sequence belongs to the D-alanine--D-alanine ligase family. Mg(2+) serves as cofactor. The cofactor is Mn(2+).

The protein resides in the cytoplasm. It carries out the reaction 2 D-alanine + ATP = D-alanyl-D-alanine + ADP + phosphate + H(+). It participates in cell wall biogenesis; peptidoglycan biosynthesis. Functionally, cell wall formation. The protein is D-alanine--D-alanine ligase of Methylibium petroleiphilum (strain ATCC BAA-1232 / LMG 22953 / PM1).